A 384-amino-acid polypeptide reads, in one-letter code: MINNVSSLFPTVNRNITAVYKKSSFSVSPQKITLNPVKISSPFSPSSSSISATTLFRAPNAHSASFHRQSTAESSLHQQLPNVRQRLIQHLAEHGIXPARSMAEHIPPAPKWPAPPPPVQNEQSRPLPDVAQRLMQHLAEHGIQPARNMAEHIPPAPNWPAPTPPVQNEQSRPLPDVAQRLMQHLAEHGIQPARNMAEHIPPAPXWXAPTPPVQNEQSRPLPDVAQRLMQHLAEHGIZPARSMAEHIPPAPNWPAPPPPVQNEQSRPLPDVAQRLXQHLAEHGIQPARNMAEHIPPAPNWPAPXXPVXNEQSRPLXDVAXRLMQHLAEHGIQPARNMAEHIPPAPNWXAPTPPVQNEQSRPLPDVAQRLMQHLAEHGINTSKRS.

6 tandem repeats follow at residues 96–142 (IXPA…AEHG), 143–189 (IQPA…AEHG), 190–236 (IQPA…AEHG), 237–283 (IZPA…AEHG), 284–330 (IQPA…AEHG), and 331–377 (IQPA…AEHG). Positions 96 to 377 (IXPARSMAEH…RLMQHLAEHG (282 aa)) are 6 X 48 AA approximate tandem repeats. Residues 247-266 (IPPAPNWPAPPPPVQNEQSR) are disordered. Residues 248 to 260 (PPAPNWPAPPPPV) show a composition bias toward pro residues.

Belongs to the EspF(U)/TccP family. In terms of assembly, interacts with host BAIAP2 and host WASL/N-WASP. Can also interact with host proteins BAIAP2L1 and WAS/WASP.

Its subcellular location is the secreted. It is found in the host cytoplasm. Required for efficient pedestal formation in host epithelial cells during infection. Acts as an intermediate between Tir (via host BAIAP2) and host WASL/N-WASP. Directly binds and activates WASL/N-WASP, which stimulates actin polymerization and leads to the formation of actin pedestals at the sites of bacterial adhesion. The chain is Secreted effector protein EspF(U) (espF(U)) from Escherichia coli O157:H7.